The following is a 270-amino-acid chain: Cyclase-like protein 3 (270 aa).

Positions 1 to 23 are cleaved as a signal peptide; it reads MMAHLAPLFLLLLLLLLPLHAAA.

It belongs to the Cyclase 1 superfamily. Highly expressed in leaf sheaths. leaf collars and flag leaves. Expressed in roots, stems, glumes, young panicles and pistils.

The protein localises to the secreted. It localises to the extracellular space. The protein resides in the extracellular matrix. In terms of biological role, may be involved in response to stresses. The chain is Cyclase-like protein 3 from Oryza sativa subsp. japonica (Rice).